The following is a 288-amino-acid chain: Ubiquitin thioesterase otubain-like (288 aa).

The OTU domain maps to 76 to 275 (SHIRFIRGDG…PGHYDLIYKA (200 aa)). The active site involves Asp-84. Cys-87 (nucleophile) is an active-site residue. Ile-175 provides a ligand contact to substrate. Catalysis depends on residues His-244 and His-268.

Belongs to the peptidase C65 family.

The enzyme catalyses Thiol-dependent hydrolysis of ester, thioester, amide, peptide and isopeptide bonds formed by the C-terminal Gly of ubiquitin (a 76-residue protein attached to proteins as an intracellular targeting signal).. Its function is as follows. Hydrolase that can remove conjugated ubiquitin from proteins and plays an important regulatory role at the level of protein turnover by preventing degradation. Specifically cleaves 'Lys-48'-linked polyubiquitin. The polypeptide is Ubiquitin thioesterase otubain-like (Caenorhabditis briggsae).